A 319-amino-acid chain; its full sequence is Urease accessory protein UreD (319 aa).

The interval 298 to 319 (QEQPLPPSSFKTNTAVPAVRTH) is disordered.

The protein belongs to the UreD family. As to quaternary structure, ureD, UreF and UreG form a complex that acts as a GTP-hydrolysis-dependent molecular chaperone, activating the urease apoprotein by helping to assemble the nickel containing metallocenter of UreC. The UreE protein probably delivers the nickel.

It is found in the cytoplasm. In terms of biological role, required for maturation of urease via the functional incorporation of the urease nickel metallocenter. The polypeptide is Urease accessory protein UreD (Synechococcus sp. (strain WH7805)).